Consider the following 361-residue polypeptide: Chorismate synthase (361 aa).

NADP(+) is bound by residues Arg48 and Arg54. Residues 125–127 (RSS), 238–239 (NA), Gly278, 293–297 (KPTSS), and Arg319 contribute to the FMN site.

This sequence belongs to the chorismate synthase family. In terms of assembly, homotetramer. Requires FMNH2 as cofactor.

It catalyses the reaction 5-O-(1-carboxyvinyl)-3-phosphoshikimate = chorismate + phosphate. Its pathway is metabolic intermediate biosynthesis; chorismate biosynthesis; chorismate from D-erythrose 4-phosphate and phosphoenolpyruvate: step 7/7. Its function is as follows. Catalyzes the anti-1,4-elimination of the C-3 phosphate and the C-6 proR hydrogen from 5-enolpyruvylshikimate-3-phosphate (EPSP) to yield chorismate, which is the branch point compound that serves as the starting substrate for the three terminal pathways of aromatic amino acid biosynthesis. This reaction introduces a second double bond into the aromatic ring system. In Sodalis glossinidius (strain morsitans), this protein is Chorismate synthase.